Consider the following 479-residue polypeptide: Anaerobic nitric oxide reductase flavorubredoxin (479 aa).

A zinc metallo-hydrolase region spans residues 30–210 (LRGSSYNSYL…PFSRLVTPKI (181 aa)). Positions 79, 81, 83, 147, 166, and 227 each coordinate Fe cation. One can recognise a Flavodoxin-like domain in the interval 254–393 (ITIFYDTMSN…LCREHGREIA (140 aa)). FMN contacts are provided by residues 260–264 (TMSNN) and 342–369 (AFGS…EMSL). The Rubredoxin-like domain occupies 423 to 479 (GPRMQCSVCQWIYDPAKGEPMQDVAPGTPWSEVPDNFLCPECSLGKDVFEELASEAK). 4 residues coordinate Fe cation: cysteine 428, cysteine 431, cysteine 461, and cysteine 464.

It in the N-terminal section; belongs to the zinc metallo-hydrolase group 3 family. As to quaternary structure, homotetramer. Requires Fe cation as cofactor. FMN serves as cofactor.

Its subcellular location is the cytoplasm. It functions in the pathway nitrogen metabolism; nitric oxide reduction. Anaerobic nitric oxide reductase; uses NADH to detoxify nitric oxide (NO), protecting several 4Fe-4S NO-sensitive enzymes. Has at least 2 reductase partners, only one of which (NorW, flavorubredoxin reductase) has been identified. NO probably binds to the di-iron center; electrons enter from the reductase at rubredoxin and are transferred sequentially to the FMN center and the di-iron center. Also able to function as an aerobic oxygen reductase. In Escherichia coli (strain K12 / DH10B), this protein is Anaerobic nitric oxide reductase flavorubredoxin (norV).